The sequence spans 629 residues: tRNA uridine 5-carboxymethylaminomethyl modification enzyme MnmG (629 aa).

Residue G13 to G18 participates in FAD binding. Position 273–287 (G273–F287) interacts with NAD(+).

Belongs to the MnmG family. In terms of assembly, homodimer. Heterotetramer of two MnmE and two MnmG subunits. Requires FAD as cofactor.

The protein resides in the cytoplasm. NAD-binding protein involved in the addition of a carboxymethylaminomethyl (cmnm) group at the wobble position (U34) of certain tRNAs, forming tRNA-cmnm(5)s(2)U34. The protein is tRNA uridine 5-carboxymethylaminomethyl modification enzyme MnmG of Shewanella amazonensis (strain ATCC BAA-1098 / SB2B).